A 238-amino-acid polypeptide reads, in one-letter code: Small ribosomal subunit protein uS2c (238 aa).

The protein belongs to the universal ribosomal protein uS2 family.

It is found in the plastid. The protein localises to the chloroplast. This chain is Small ribosomal subunit protein uS2c (rps2), found in Jasminum nudiflorum (Winter jasmine).